Reading from the N-terminus, the 791-residue chain is Phenylalanine--tRNA ligase beta subunit (791 aa).

In terms of domain architecture, tRNA-binding spans 39–148; sequence AADFSGVVVA…ADAPVGADIR (110 aa). The B5 domain maps to 401-476; sequence PLRAPVRLRE…RVYGYDAIPR (76 aa). Asp-454, Asp-460, Glu-463, and Glu-464 together coordinate Mg(2+). An FDX-ACB domain is found at 697–790; the sequence is SRFPLVRRDL…LAADFGAKLR (94 aa).

This sequence belongs to the phenylalanyl-tRNA synthetase beta subunit family. Type 1 subfamily. Tetramer of two alpha and two beta subunits. It depends on Mg(2+) as a cofactor.

It is found in the cytoplasm. The enzyme catalyses tRNA(Phe) + L-phenylalanine + ATP = L-phenylalanyl-tRNA(Phe) + AMP + diphosphate + H(+). The chain is Phenylalanine--tRNA ligase beta subunit from Methylococcus capsulatus (strain ATCC 33009 / NCIMB 11132 / Bath).